Here is a 582-residue protein sequence, read N- to C-terminus: Pre-hexon-linking protein IIIa (582 aa).

The interval 1–114 is peripentonal hexon-tethering domain; that stretch reads MQRPAIIAER…ALLERVARYN (114 aa). The binding to hexon-linking protein stretch occupies residues 146–259; sequence GSLVALNAFL…FTNTNSLSRD (114 aa). At Ser-233 the chain carries Phosphoserine; by host. Thr-282 bears the Phosphothreonine; by host mark. Residues 437–479 are disordered; that stretch reads GKKEAGDEGPLLDSRASSPFPSLTSLPASVNSGRTTRPRLTGE. Residues 451–471 are compositionally biased toward polar residues; the sequence is RASSPFPSLTSLPASVNSGRT. 2 positions are modified to phosphoserine; by host: Ser-458 and Ser-465. The residue at position 482 (Tyr-482) is a Phosphotyrosine; by host. Ser-503 carries the phosphoserine; by host modification. A compositionally biased stretch (basic and acidic residues) spans 517–526; the sequence is ERREWEERQP. Residues 517-582 form a disordered region; sequence ERREWEERQP…RPQGCIGSLY (66 aa). Residues 530 to 543 show a composition bias toward basic residues; it reads RPPRQRWQRRKKGA. The propeptide occupies 566–582; that stretch reads GNPFAHLRPQGCIGSLY.

Belongs to the adenoviridae hexon-linking protein IIIa family. As to quaternary structure, interacts with hexon proteins; this interaction tethers the peripentonal hexons to hexons situated in the facet. Interacts with the penton protein (via N-terminus). Interacts with packaging protein 3; this interaction is required to promote correct genome packaging. Post-translationally, cleaved near the C-terminus by the viral protease during virion maturation to form the mature protein.

It is found in the virion. It localises to the host nucleus. In terms of biological role, structural component of the virion that acts as a cement protein on the capsid exterior which mediates the interactions between the hexons, including the peripentonal hexons, and reaches all the way to the penton vertices. Two hexon linking proteins IIIa, one from each facet, stabilize the unique edge interface between a pair of facets. As the virus enters the host cell, hexon linking proteins IIIa are shed concomitant with virion acidification in the endosome. During virus assembly, seems to play a role in the serotype specificity of the packaging of viral DNA via its interaction with packaging protein 3. The protein is Pre-hexon-linking protein IIIa of Human adenovirus A serotype 12 (HAdV-12).